A 185-amino-acid polypeptide reads, in one-letter code: ATP-dependent protease subunit HslV (185 aa).

The active site involves Thr12. Residues Ala168, Cys171, and Thr174 each coordinate Na(+).

It belongs to the peptidase T1B family. HslV subfamily. As to quaternary structure, a double ring-shaped homohexamer of HslV is capped on each side by a ring-shaped HslU homohexamer. The assembly of the HslU/HslV complex is dependent on binding of ATP.

Its subcellular location is the cytoplasm. The enzyme catalyses ATP-dependent cleavage of peptide bonds with broad specificity.. Its activity is regulated as follows. Allosterically activated by HslU binding. In terms of biological role, protease subunit of a proteasome-like degradation complex believed to be a general protein degrading machinery. The sequence is that of ATP-dependent protease subunit HslV from Cereibacter sphaeroides (strain ATCC 17025 / ATH 2.4.3) (Rhodobacter sphaeroides).